Consider the following 167-residue polypeptide: General odorant-binding protein 1 (167 aa).

Positions 1–22 (MAHTLQTVVLLLGTSILHPILA) are cleaved as a signal peptide. Intrachain disulfides connect Cys41/Cys76, Cys72/Cys130, and Cys119/Cys139.

It belongs to the PBP/GOBP family. As to expression, antenna.

Functionally, present in the aqueous fluid surrounding olfactory sensory dendrites and are thought to aid in the capture and transport of hydrophobic odorants into and through this fluid. This Antheraea pernyi (Chinese oak silk moth) protein is General odorant-binding protein 1.